Reading from the N-terminus, the 227-residue chain is Enolase-phosphatase E1 (227 aa).

Belongs to the HAD-like hydrolase superfamily. MasA/MtnC family. Monomer. It depends on Mg(2+) as a cofactor.

The catalysed reaction is 5-methylsulfanyl-2,3-dioxopentyl phosphate + H2O = 1,2-dihydroxy-5-(methylsulfanyl)pent-1-en-3-one + phosphate. The protein operates within amino-acid biosynthesis; L-methionine biosynthesis via salvage pathway; L-methionine from S-methyl-5-thio-alpha-D-ribose 1-phosphate: step 3/6. It participates in amino-acid biosynthesis; L-methionine biosynthesis via salvage pathway; L-methionine from S-methyl-5-thio-alpha-D-ribose 1-phosphate: step 4/6. In terms of biological role, bifunctional enzyme that catalyzes the enolization of 2,3-diketo-5-methylthiopentyl-1-phosphate (DK-MTP-1-P) into the intermediate 2-hydroxy-3-keto-5-methylthiopentenyl-1-phosphate (HK-MTPenyl-1-P), which is then dephosphorylated to form the acireductone 1,2-dihydroxy-3-keto-5-methylthiopentene (DHK-MTPene). The protein is Enolase-phosphatase E1 of Pseudomonas syringae pv. syringae (strain B728a).